Consider the following 1030-residue polypeptide: Tricorn protease (1030 aa).

The tract at residues 1 to 270 (MANLLQNPDI…DNVKSLDIGP (270 aa)) is six-bladed beta propeller. The tract at residues 93–94 (RR) is binds the substrate's C-terminus. The segment at 286–635 (LEDFSMSPGD…EEEKSLNIDA (350 aa)) is seven-bladed beta propeller. Residues 641–712 (NVKEDFAEMY…RTSHSYEMGG (72 aa)) form a C-1 region. The active-site Charge relay system is His-706. Residues 721–816 (RAGRIACDFK…SGFVDVLQDD (96 aa)) are PDZ-like. The tract at residues 817 to 1022 (RYIRYRAWVE…IEMVLADLEK (206 aa)) is C-2. 877–879 (GGG) contacts substrate. The active-site Nucleophile is Ser-926. A substrate-binding site is contributed by 954-956 (GIS). Glu-984 (charge relay system) is an active-site residue.

Belongs to the peptidase S41B family. As to quaternary structure, part of the tricorn proteolytic complex.

Its subcellular location is the cytoplasm. Functionally, tricorn degrades oligopeptides in a sequential manner. This is Tricorn protease (tri) from Thermoplasma volcanium (strain ATCC 51530 / DSM 4299 / JCM 9571 / NBRC 15438 / GSS1).